Here is an 802-residue protein sequence, read N- to C-terminus: Acetyl-CoA decarbonylase/synthase complex subunit alpha 1 (802 aa).

The [4Fe-4S] cluster site is built by Cys68, Cys71, Cys76, and Cys86. His109 contributes to the CO binding site. His243, Cys271, and Cys310 together coordinate [Ni-4Fe-4S] cluster. 4Fe-4S ferredoxin-type domains are found at residues 395–424 (DEAL…VDQG) and 435–464 (SKLA…INVI). Positions 405, 408, 411, 415, 444, 447, 450, and 454 each coordinate [4Fe-4S] cluster. Residues Cys512, Cys541, and Cys576 each coordinate [Ni-4Fe-4S] cluster.

Belongs to the Ni-containing carbon monoxide dehydrogenase family. In terms of assembly, heterotetramer of two alpha and two epsilon subunits. The ACDS complex is made up of alpha, epsilon, beta, gamma and delta subunits with a probable stoichiometry of (alpha(2)epsilon(2))(4)-beta(8)-(gamma(1)delta(1))(8). It depends on [4Fe-4S] cluster as a cofactor. [Ni-4Fe-4S] cluster serves as cofactor.

It carries out the reaction CO + 2 oxidized [2Fe-2S]-[ferredoxin] + H2O = 2 reduced [2Fe-2S]-[ferredoxin] + CO2 + 2 H(+). In terms of biological role, part of the ACDS complex that catalyzes the reversible cleavage of acetyl-CoA, allowing autotrophic growth from CO(2). The alpha-epsilon subcomponent functions as a carbon monoxide dehydrogenase. This Archaeoglobus fulgidus (strain ATCC 49558 / DSM 4304 / JCM 9628 / NBRC 100126 / VC-16) protein is Acetyl-CoA decarbonylase/synthase complex subunit alpha 1.